The following is a 218-amino-acid chain: Eukaryotic translation initiation factor 3 subunit K (218 aa).

A2 carries the post-translational modification N-acetylalanine. T28 bears the Phosphothreonine mark. Positions 42–204 (YDLEANLAVL…SIKPKNIVEK (163 aa)) constitute a PCI domain. Residue S217 is modified to Phosphoserine.

This sequence belongs to the eIF-3 subunit K family. In terms of assembly, component of the eukaryotic translation initiation factor 3 (eIF-3) complex, which is composed of 13 subunits: EIF3A, EIF3B, EIF3C, EIF3D, EIF3E, EIF3F, EIF3G, EIF3H, EIF3I, EIF3J, EIF3K, EIF3L and EIF3M. The eIF-3 complex appears to include 3 stable modules: module A is composed of EIF3A, EIF3B, EIF3G and EIF3I; module B is composed of EIF3F, EIF3H, and EIF3M; and module C is composed of EIF3C, EIF3D, EIF3E, EIF3K and EIF3L. EIF3C of module C binds EIF3B of module A and EIF3H of module B, thereby linking the three modules. EIF3J is a labile subunit that binds to the eIF-3 complex via EIF3B. The eIF-3 complex interacts with RPS6KB1 under conditions of nutrient depletion. Mitogenic stimulation leads to binding and activation of a complex composed of MTOR and RPTOR, leading to phosphorylation and release of RPS6KB1 and binding of EIF4B to eIF-3. Interacts with CCND3, but not with CCND1 and CCND2.

It localises to the nucleus. It is found in the cytoplasm. In terms of biological role, component of the eukaryotic translation initiation factor 3 (eIF-3) complex, which is required for several steps in the initiation of protein synthesis. The eIF-3 complex associates with the 40S ribosome and facilitates the recruitment of eIF-1, eIF-1A, eIF-2:GTP:methionyl-tRNAi and eIF-5 to form the 43S pre-initiation complex (43S PIC). The eIF-3 complex stimulates mRNA recruitment to the 43S PIC and scanning of the mRNA for AUG recognition. The eIF-3 complex is also required for disassembly and recycling of post-termination ribosomal complexes and subsequently prevents premature joining of the 40S and 60S ribosomal subunits prior to initiation. The eIF-3 complex specifically targets and initiates translation of a subset of mRNAs involved in cell proliferation, including cell cycling, differentiation and apoptosis, and uses different modes of RNA stem-loop binding to exert either translational activation or repression. This Bos taurus (Bovine) protein is Eukaryotic translation initiation factor 3 subunit K.